We begin with the raw amino-acid sequence, 156 residues long: UPF0225 protein PFLU_1319 (156 aa).

The protein belongs to the UPF0225 family.

The polypeptide is UPF0225 protein PFLU_1319 (Pseudomonas fluorescens (strain SBW25)).